A 317-amino-acid chain; its full sequence is Transmembrane and death domain protein 1 (317 aa).

Residues 1-27 (MAARTLASALVLTLWVWALAPAGAVDA) form the signal peptide. The Extracellular portion of the chain corresponds to 28-218 (MGPHAAVRLA…ERSPMGWAGP (191 aa)). Positions 62-73 (ELSRLSEDRLAR) are enriched in basic and acidic residues. A disordered region spans residues 62-106 (ELSRLSEDRLARPEPLNTTSGSPSRRRRREAAEDPAGRVAGPGEV). The region spanning 66-150 (LSEDRLARPE…DVARELGKNL (85 aa)) is the Death domain. A glycan (N-linked (GlcNAc...) asparagine) is linked at Asn78. A helical transmembrane segment spans residues 219-239 (LALGLLTGFVGALGTGALVVL). Topologically, residues 240–317 (LTLWITGGDG…SWGSGALDGL (78 aa)) are cytoplasmic.

The protein resides in the membrane. The protein is Transmembrane and death domain protein 1 of Homo sapiens (Human).